Consider the following 521-residue polypeptide: METAVAYYKDGVPYDDKGEVIITLLNGNPDGSGSGGGGGTGGSKSESSAAIHATAKWSTAQLKKTQAEQAARAKAAAEAQAKAKANRDALTQHLKDIVNEALRHNSTHPEVIDLLMPIMQRCRQKQSGCALQKQKKKPVKKRKRAEKSFQEAEQRRKEIEKEQAETERQLKLAEDEEKRLAALSEEARAVEVAQKNLAAAQSELAKVDEEINTLNTRLSSSIHARDAETNTLSGKRNELDQASAKYKELDERVKLLSPRANDPLQSRPFFEATRLRARRGDEMEEKQKQVTATETRLNQISSEINGIQEAISQANNKRSTAVSRIHDAEDNLKTAQTNLLNSQIKDAVDATVSFYQTLSEKYGEKYSKMAQELADKSKGKKISNVNEALAAFEKYKDVLNKKFSKADRDAIFNALEAVKYEDWAKHLDQFAKYLKITGHVSFGYDVVSDILKIKDTGDWKPLFLTLEKKAVDAGVSYVVVLLFSVLAGTTLGIWGIAIVTGILCAFIDKNKLNTINEVLGI.

Disordered stretches follow at residues 26–52 and 127–163; these read NGNP…AAIH and SGCA…EKEQ. Gly residues predominate over residues 30–42; it reads DGSGSGGGGGTGG. Over residues 133–145 the composition is skewed to basic residues; the sequence is KQKKKPVKKRKRA. Residues 146 to 163 are compositionally biased toward basic and acidic residues; it reads EKSFQEAEQRRKEIEKEQ. 2 consecutive transmembrane segments (helical) span residues 470–486 and 493–509; these read AVDA…FSVL and IWGI…FIDK.

It belongs to the channel forming colicin family.

The protein resides in the cell membrane. Functionally, this colicin is a channel-forming colicin. This class of transmembrane toxins depolarize the cytoplasmic membrane, leading to dissipation of cellular energy. Its function is as follows. Colicins are polypeptide toxins produced by and active against E.coli and closely related bacteria. The chain is Colicin-E1* (cea) from Shigella sonnei.